The following is a 777-amino-acid chain: Beta-hexosaminidase (777 aa).

The N-terminal stretch at 1–18 (MKRLTFGACICCLLSLMA) is a signal peptide. A lipid anchor (N-palmitoyl cysteine) is attached at cysteine 19. Cysteine 19 is lipidated: S-diacylglycerol cysteine. Positions 625–766 (APKPGLTIRT…VMIRLKGEEK (142 aa)) constitute a PA14 domain.

Belongs to the glycosyl hydrolase 20 family.

Its subcellular location is the cell outer membrane. The catalysed reaction is Hydrolysis of terminal non-reducing N-acetyl-D-hexosamine residues in N-acetyl-beta-D-hexosaminides.. The protein is Beta-hexosaminidase (nahA) of Porphyromonas gingivalis (strain ATCC BAA-308 / W83).